A 71-amino-acid chain; its full sequence is DNA-directed RNA polymerase subunit omega (71 aa).

Belongs to the RNA polymerase subunit omega family. The RNAP catalytic core consists of 2 alpha, 1 beta/beta' and 1 omega subunit. When a sigma factor is associated with the core the holoenzyme is formed, which can initiate transcription.

It catalyses the reaction RNA(n) + a ribonucleoside 5'-triphosphate = RNA(n+1) + diphosphate. Promotes RNA polymerase assembly. Latches the N- and C-terminal regions of the beta' subunit thereby facilitating its interaction with the beta and alpha subunits. This is DNA-directed RNA polymerase subunit omega from Wolinella succinogenes (strain ATCC 29543 / DSM 1740 / CCUG 13145 / JCM 31913 / LMG 7466 / NCTC 11488 / FDC 602W) (Vibrio succinogenes).